A 263-amino-acid polypeptide reads, in one-letter code: Acetylglutamate kinase (263 aa).

Substrate contacts are provided by residues 48-49 (GG), Arg-70, and Asn-162.

This sequence belongs to the acetylglutamate kinase family. ArgB subfamily.

Its subcellular location is the cytoplasm. It catalyses the reaction N-acetyl-L-glutamate + ATP = N-acetyl-L-glutamyl 5-phosphate + ADP. It functions in the pathway amino-acid biosynthesis; L-arginine biosynthesis; N(2)-acetyl-L-ornithine from L-glutamate: step 2/4. Catalyzes the ATP-dependent phosphorylation of N-acetyl-L-glutamate. This is Acetylglutamate kinase from Shewanella sediminis (strain HAW-EB3).